Here is a 220-residue protein sequence, read N- to C-terminus: Deoxyribose-phosphate aldolase 1 (220 aa).

Asp-89 serves as the catalytic Proton donor/acceptor. The Schiff-base intermediate with acetaldehyde role is filled by Lys-151. The Proton donor/acceptor role is filled by Lys-180.

Belongs to the DeoC/FbaB aldolase family. DeoC type 1 subfamily.

Its subcellular location is the cytoplasm. The catalysed reaction is 2-deoxy-D-ribose 5-phosphate = D-glyceraldehyde 3-phosphate + acetaldehyde. It functions in the pathway carbohydrate degradation; 2-deoxy-D-ribose 1-phosphate degradation; D-glyceraldehyde 3-phosphate and acetaldehyde from 2-deoxy-alpha-D-ribose 1-phosphate: step 2/2. Functionally, catalyzes a reversible aldol reaction between acetaldehyde and D-glyceraldehyde 3-phosphate to generate 2-deoxy-D-ribose 5-phosphate. The protein is Deoxyribose-phosphate aldolase 1 of Staphylococcus aureus (strain COL).